We begin with the raw amino-acid sequence, 355 residues long: Protein RecA (355 aa).

Residue 72–79 (GPESSGKT) participates in ATP binding.

It belongs to the RecA family.

It localises to the cytoplasm. Can catalyze the hydrolysis of ATP in the presence of single-stranded DNA, the ATP-dependent uptake of single-stranded DNA by duplex DNA, and the ATP-dependent hybridization of homologous single-stranded DNAs. It interacts with LexA causing its activation and leading to its autocatalytic cleavage. The sequence is that of Protein RecA from Wolbachia pipientis subsp. Culex pipiens (strain wPip).